We begin with the raw amino-acid sequence, 376 residues long: Pulmonary surfactant-associated protein B (376 aa).

Positions 1–24 (MAKLHLQWLLLLPTLCSLGAATES) are cleaved as a signal peptide. The 39-residue stretch at 25–63 (ASSPDCAQGPKFWCQSLEQAIQCRALGHCLQEVWGHAGA) folds into the Saposin A-type domain. Positions 25–190 (ASSPDCAQGP…PHTQDLSEQQ (166 aa)) are excised as a propeptide. Saposin B-type domains are found at residues 63–145 (ANDL…PLGQ), 194–271 (PLPF…STAD), and 290–365 (QDTE…EAPA). Cystine bridges form between Cys67/Cys141, Cys70/Cys135, Cys98/Cys110, Cys198/Cys267, Cys201/Cys261, Cys225/Cys236, Cys294/Cys361, Cys297/Cys355, and Cys320/Cys330. Residues 270-376 (ADAIGPALPA…PLQCFQTPHL (107 aa)) constitute a propeptide that is removed on maturation. Residue Asn306 is glycosylated (N-linked (GlcNAc...) asparagine).

In terms of assembly, homodimer; disulfide-linked.

Its subcellular location is the secreted. The protein localises to the extracellular space. The protein resides in the surface film. In terms of biological role, pulmonary surfactant-associated proteins promote alveolar stability by lowering the surface tension at the air-liquid interface in the peripheral air spaces. SP-B increases the collapse pressure of palmitic acid to nearly 70 millinewtons per meter. The polypeptide is Pulmonary surfactant-associated protein B (Sftpb) (Rattus norvegicus (Rat)).